The primary structure comprises 189 residues: Peptidyl-tRNA hydrolase (189 aa).

Residue Y15 coordinates tRNA. Catalysis depends on H20, which acts as the Proton acceptor. Residues F66, N68, and N114 each contribute to the tRNA site.

This sequence belongs to the PTH family. In terms of assembly, monomer.

The protein localises to the cytoplasm. The enzyme catalyses an N-acyl-L-alpha-aminoacyl-tRNA + H2O = an N-acyl-L-amino acid + a tRNA + H(+). Its function is as follows. Hydrolyzes ribosome-free peptidyl-tRNAs (with 1 or more amino acids incorporated), which drop off the ribosome during protein synthesis, or as a result of ribosome stalling. Functionally, catalyzes the release of premature peptidyl moieties from peptidyl-tRNA molecules trapped in stalled 50S ribosomal subunits, and thus maintains levels of free tRNAs and 50S ribosomes. The sequence is that of Peptidyl-tRNA hydrolase from Streptococcus pyogenes serotype M6 (strain ATCC BAA-946 / MGAS10394).